A 300-amino-acid chain; its full sequence is Taste receptor type 2 member 105 (300 aa).

The Extracellular segment spans residues 1 to 7; the sequence is MLSAAEG. The helical transmembrane segment at 8 to 28 threads the bilayer; sequence ILLSIATVEAGLGVLGNTFIA. The Cytoplasmic portion of the chain corresponds to 29–43; sequence LVNCMDWAKNNKLSM. Residues 44–64 traverse the membrane as a helical segment; that stretch reads TGFLLIGLATSRIFIVWLLTL. The Extracellular segment spans residues 65–87; the sequence is DAYAKLFYPSKYFSSSLIEIISY. A helical membrane pass occupies residues 88–108; it reads IWMTVNHLTVWFATSLSIFYF. The Cytoplasmic portion of the chain corresponds to 109–128; sequence LKIANFSDCVFLWLKRRTDK. The helical transmembrane segment at 129–149 threads the bilayer; it reads AFVFLLGCLLTSWVISFSFVV. At 150–181 the chain is on the extracellular side; it reads KVMKDGKVNHRNRTSEMYWEKRQFTINYVFLN. Asn161 is a glycosylation site (N-linked (GlcNAc...) asparagine). Residues 182-202 traverse the membrane as a helical segment; that stretch reads IGVISLFMMTLTACFLLIMSL. The Cytoplasmic segment spans residues 203-233; the sequence is WRHSRQMQSGVSGFRDLNTEAHVKAIKFLIS. A helical membrane pass occupies residues 234-254; sequence FIILFVLYFIGVSIEIICIFI. The Extracellular portion of the chain corresponds to 255–259; sequence PENKL. A helical membrane pass occupies residues 260 to 280; sequence LFIFGFTTASIYPCCHSFILI. The Cytoplasmic segment spans residues 281-300; sequence LSNSQLKQAFVKVLQGLKFF.

The protein belongs to the G-protein coupled receptor T2R family. Expressed in subsets of taste receptor cells of the tongue and palate epithelium and exclusively in gustducin-positive cells. Expressed in gastric and duodenal tissues.

It is found in the membrane. Its function is as follows. Gustducin-coupled cycloheximide receptor implicated in the perception of bitter compounds in the oral cavity and the gastrointestinal tract. Signals through PLCB2 and the calcium-regulated cation channel TRPM5. This Mus musculus (Mouse) protein is Taste receptor type 2 member 105 (Tas2r105).